Here is a 622-residue protein sequence, read N- to C-terminus: Leucine-rich repeat-containing protein 70 (622 aa).

An N-terminal signal peptide occupies residues 1-31 (MCGLQFSLPCLRLFLVVTCYLLLLLHKEILG). The 29-residue stretch at 32 to 60 (CSSVCQLCTGRQINCRNLGLSSIPKNFPE) folds into the LRRNT domain. LRR repeat units follow at residues 61-82 (STVFLYLTGNNISYINESELTG), 85-106 (SLVALYLDNSNILYVYPKAFVQ), 109-130 (HLYFLFLNNNFIKRLDPGIFKG), 133-154 (NLRNLYLQYNQVSFVPRGVFND), 157-178 (SVQYLNLQRNRLTVLGSGTFVG), 181-202 (ALRILDLSNNNILRISESGFQH), 205-226 (NLACLYLGSNNLTKVPSNAFEV), 229-250 (SLRRLSLSHNPIEAIQPFAFKG), 253-274 (NLEYLLLKNSRIRNVTRDGFSG), 277-298 (NLKHLILSHNDLENLNSDTFSL), 301-322 (NLIYLKLDRNRIISIDNDTFEN), and 326-347 (SLKILNLSFNNLTALHPRVLKP). Asn-215 is a glycosylation site (N-linked (GlcNAc...) asparagine). The N-linked (GlcNAc...) asparagine glycan is linked to Asn-266. N-linked (GlcNAc...) asparagine glycosylation is found at Asn-331 and Asn-400. In terms of domain architecture, LRRCT spans 359–406 (NPWECNCKLLGLRDWLASSAITLNIYCQNPPSMRGRALRYINITNCVT). A helical membrane pass occupies residues 527 to 547 (AFDILLAFFILACVLIIFLIY).

In terms of tissue distribution, expressed at low levels in many tissues, including smooth muscle, brain, uterus, pancreas, cartilage, adipose, spleen and testis.

The protein resides in the membrane. Its function is as follows. Renders cells highly sensitive to the activation by cytokines and lipopolysaccharide (LPS). This chain is Leucine-rich repeat-containing protein 70 (LRRC70), found in Homo sapiens (Human).